Consider the following 62-residue polypeptide: Kininogen-1 (62 aa).

Positions 1-22 are cleaved as a signal peptide; that stretch reads MDILKKSLFLVLFLGLVSFSIC. Positions 24–62 are disordered; it reads EEKRDTEEEENDDEIEEESEEKKREAPERPPGFTPFRIY. The segment covering 30–42 has biased composition (acidic residues); the sequence is EEEENDDEIEEES. A 4-hydroxyproline; partial modification is found at proline 54. Tyrosine 62 carries the post-translational modification Sulfotyrosine.

The protein belongs to the frog skin active peptide (FSAP) family. Bradykinin-related peptide subfamily. As to expression, expressed by the skin glands.

The protein resides in the secreted. Its function is as follows. Inhibits ACE with a Ki of 1.6 uM, and targets B2 bradykinin receptor (BDKRB2). Provokes contraction of smooth muscle preparation (ileum). In vivo, induces an early hyperalgesic effects in living rats after intraplantar injection. The chain is Kininogen-1 from Phyllomedusa sauvagei (Sauvage's leaf frog).